A 468-amino-acid chain; its full sequence is Adenosylhomocysteinase (468 aa).

3 residues coordinate substrate: threonine 63, aspartate 139, and glutamate 164. Residue 165–167 participates in NAD(+) binding; the sequence is TTT. Positions 194 and 198 each coordinate substrate. Residues asparagine 199, 228–233, glutamate 251, asparagine 300, 321–323, and asparagine 374 contribute to the NAD(+) site; these read GYGDVG and IGH.

It belongs to the adenosylhomocysteinase family. NAD(+) serves as cofactor.

It localises to the cytoplasm. It carries out the reaction S-adenosyl-L-homocysteine + H2O = L-homocysteine + adenosine. It participates in amino-acid biosynthesis; L-homocysteine biosynthesis; L-homocysteine from S-adenosyl-L-homocysteine: step 1/1. In terms of biological role, may play a key role in the regulation of the intracellular concentration of adenosylhomocysteine. The polypeptide is Adenosylhomocysteinase (Stutzerimonas stutzeri (strain A1501) (Pseudomonas stutzeri)).